Here is a 169-residue protein sequence, read N- to C-terminus: Positive control factor (169 aa).

A DNA-binding region (H-T-H motif) is located at residues 132–157; sequence YERIADLLGVKKSTVQTTIKRASLKM.

Its function is as follows. Positive regulatory protein that acts at the late promoter PL. This chain is Positive control factor (xpf), found in Bacillus subtilis (strain 168).